We begin with the raw amino-acid sequence, 161 residues long: MIDRIPMSVRGNKKLKEELLRLTRVERLDVVKAIEVAREHGDLKENAEYHAAKERQGMIEARIMDLKDKLGRAEVIDCLQVSCKRVVFGTVVVLLDLDTDEEVTYQLLGPEESEVKAGSISVLSPIGRSMLSKEEGDEVVTKTPGGTREFEVVEIKTGDFA.

The protein belongs to the GreA/GreB family.

In terms of biological role, necessary for efficient RNA polymerase transcription elongation past template-encoded arresting sites. The arresting sites in DNA have the property of trapping a certain fraction of elongating RNA polymerases that pass through, resulting in locked ternary complexes. Cleavage of the nascent transcript by cleavage factors such as GreA or GreB allows the resumption of elongation from the new 3'terminus. GreA releases sequences of 2 to 3 nucleotides. The sequence is that of Transcription elongation factor GreA from Desulfotalea psychrophila (strain LSv54 / DSM 12343).